The following is a 247-amino-acid chain: Ribosomal RNA large subunit methyltransferase E (247 aa).

5 residues coordinate S-adenosyl-L-methionine: glycine 99, tryptophan 101, aspartate 123, aspartate 139, and aspartate 162. Lysine 202 serves as the catalytic Proton acceptor.

The protein belongs to the class I-like SAM-binding methyltransferase superfamily. RNA methyltransferase RlmE family.

The protein localises to the cytoplasm. The enzyme catalyses uridine(2552) in 23S rRNA + S-adenosyl-L-methionine = 2'-O-methyluridine(2552) in 23S rRNA + S-adenosyl-L-homocysteine + H(+). Functionally, specifically methylates the uridine in position 2552 of 23S rRNA at the 2'-O position of the ribose in the fully assembled 50S ribosomal subunit. The protein is Ribosomal RNA large subunit methyltransferase E of Anaplasma phagocytophilum (strain HZ).